A 141-amino-acid chain; its full sequence is Hemoglobin subunit alpha-D (141 aa).

Residues 1–141 (MLNHDEKQLI…VSAVLAEKYR (141 aa)) form the Globin domain. Heme b is bound by residues His-58 and His-87.

The protein belongs to the globin family. As to quaternary structure, heterotetramer of two alpha-D chains and two beta chains. Red blood cells.

Functionally, involved in oxygen transport from the lung to the various peripheral tissues. The polypeptide is Hemoglobin subunit alpha-D (HBAD) (Chrysemys picta bellii (Western painted turtle)).